The following is a 465-amino-acid chain: Glutamate--tRNA ligase 2 (465 aa).

The 'HIGH' region motif lies at 8–18 (PSPTGLMHLGN). Residues 249–253 (PLSKR) carry the 'KMSKS' region motif. K252 is a binding site for ATP.

Belongs to the class-I aminoacyl-tRNA synthetase family. Glutamate--tRNA ligase type 1 subfamily. As to quaternary structure, monomer.

The protein localises to the cytoplasm. It carries out the reaction tRNA(Glu) + L-glutamate + ATP = L-glutamyl-tRNA(Glu) + AMP + diphosphate. In terms of biological role, catalyzes the attachment of glutamate to tRNA(Glu) in a two-step reaction: glutamate is first activated by ATP to form Glu-AMP and then transferred to the acceptor end of tRNA(Glu). This Coxiella burnetii (strain CbuK_Q154) (Coxiella burnetii (strain Q154)) protein is Glutamate--tRNA ligase 2.